A 200-amino-acid polypeptide reads, in one-letter code: MELQVVGANALAVSETTFGREFNEALIHQVVVAYAAGARQGSRAQKTRAEVSGSGKKPWRQKGTGRARSGDIKSPIWRSGGITFAAKPQDHSQKVNKKMYRGAIKSILSELVRQDRLVVVDKFEIDAPKTKVLVQKLKDLALEDVLIITASLDENLFLAARNLYKVDVRDVQGIDPVSLIAFNKVVVTVDAVKQIEEMLA.

Residues 43–71 are disordered; that stretch reads RAQKTRAEVSGSGKKPWRQKGTGRARSGD.

This sequence belongs to the universal ribosomal protein uL4 family. In terms of assembly, part of the 50S ribosomal subunit.

Its function is as follows. One of the primary rRNA binding proteins, this protein initially binds near the 5'-end of the 23S rRNA. It is important during the early stages of 50S assembly. It makes multiple contacts with different domains of the 23S rRNA in the assembled 50S subunit and ribosome. Functionally, forms part of the polypeptide exit tunnel. The chain is Large ribosomal subunit protein uL4 from Mannheimia succiniciproducens (strain KCTC 0769BP / MBEL55E).